The chain runs to 128 residues: MFS18 protein (128 aa).

The first 25 residues, 1–25, serve as a signal peptide directing secretion; sequence MARSSKMMVAARLLALALAVSTAEA. Residues 26-79 form a disordered region; that stretch reads RNIKTTTTEKKDDAVVQPQTFPPFDRLGGGASPAFGGLPGGSIPGSSIPGFSMP. Residues 52–68 are compositionally biased toward gly residues; sequence LGGGASPAFGGLPGGSI. 11 repeat units span residues 64–67, 64–75, 69–72, 69–80, 74–77, 79–82, 81–92, 86–89, 91–94, 104–107, and 113–116. The segment at 64–92 is 3 X approximate tandem repeats; that stretch reads PGGSIPGSSIPGFSMPGSGSSLPGFSLPG. Positions 64–116 are 8 X 4 AA approximate repeats; it reads PGGSIPGSSIPGFSMPGSGSSLPGFSLPGSGTMPLFGGGSPGFSGFGGMPGSP. Over residues 69–79 the composition is skewed to low complexity; that stretch reads PGSSIPGFSMP. The segment covering 99 to 113 has biased composition (gly residues); sequence FGGGSPGFSGFGGMP. The interval 99–128 is disordered; it reads FGGGSPGFSGFGGMPGSPTAGSVPEHANKP.

In terms of tissue distribution, enhanced expression in male flowers. Accumulates in the glumes and in anther walls, paleas and lemmas of mature florets.

In Zea mays (Maize), this protein is MFS18 protein (MFS18).